The following is a 570-amino-acid chain: 2-isopropylmalate synthase (570 aa).

The Pyruvate carboxyltransferase domain maps to 31–305 (PIWMSTDLRD…DPELDFSHIN (275 aa)). Residues aspartate 40, histidine 244, histidine 246, and asparagine 280 each contribute to the Mg(2+) site. The regulatory domain stretch occupies residues 437–570 (SDGAIGYVSH…RRSSAQATVA (134 aa)).

It belongs to the alpha-IPM synthase/homocitrate synthase family. LeuA type 2 subfamily. As to quaternary structure, homodimer. Requires Mg(2+) as cofactor.

The protein resides in the cytoplasm. It catalyses the reaction 3-methyl-2-oxobutanoate + acetyl-CoA + H2O = (2S)-2-isopropylmalate + CoA + H(+). The protein operates within amino-acid biosynthesis; L-leucine biosynthesis; L-leucine from 3-methyl-2-oxobutanoate: step 1/4. Catalyzes the condensation of the acetyl group of acetyl-CoA with 3-methyl-2-oxobutanoate (2-ketoisovalerate) to form 3-carboxy-3-hydroxy-4-methylpentanoate (2-isopropylmalate). This is 2-isopropylmalate synthase from Ralstonia pickettii (strain 12J).